The chain runs to 423 residues: Diaminobutyrate--2-oxoglutarate transaminase (423 aa).

Position 267 is an N6-(pyridoxal phosphate)lysine (Lys267).

The protein belongs to the class-III pyridoxal-phosphate-dependent aminotransferase family. As to quaternary structure, homohexamer. Requires pyridoxal 5'-phosphate as cofactor.

The enzyme catalyses L-2,4-diaminobutanoate + 2-oxoglutarate = L-aspartate 4-semialdehyde + L-glutamate. The protein operates within amine and polyamine biosynthesis; ectoine biosynthesis; L-ectoine from L-aspartate 4-semialdehyde: step 1/3. Its function is as follows. Catalyzes reversively the conversion of L-aspartate beta-semialdehyde (ASA) to L-2,4-diaminobutyrate (DABA) by transamination with L-glutamate. In Chromohalobacter salexigens (strain ATCC BAA-138 / DSM 3043 / CIP 106854 / NCIMB 13768 / 1H11), this protein is Diaminobutyrate--2-oxoglutarate transaminase (ectB).